The chain runs to 398 residues: Phosphoglycerate kinase (398 aa).

Residues 21–23 (DFN), arginine 36, 59–62 (HLGR), arginine 119, and arginine 157 each bind substrate. Residues lysine 208, glycine 296, glutamate 327, and 354-357 (GGDS) contribute to the ATP site.

Belongs to the phosphoglycerate kinase family. As to quaternary structure, monomer.

The protein resides in the cytoplasm. The catalysed reaction is (2R)-3-phosphoglycerate + ATP = (2R)-3-phospho-glyceroyl phosphate + ADP. Its pathway is carbohydrate degradation; glycolysis; pyruvate from D-glyceraldehyde 3-phosphate: step 2/5. This is Phosphoglycerate kinase (pgk) from Lactococcus lactis subsp. lactis (strain IL1403) (Streptococcus lactis).